The following is a 342-amino-acid chain: Ribosomal RNA small subunit methyltransferase C (342 aa).

This sequence belongs to the methyltransferase superfamily. RsmC family. Monomer.

The protein localises to the cytoplasm. It catalyses the reaction guanosine(1207) in 16S rRNA + S-adenosyl-L-methionine = N(2)-methylguanosine(1207) in 16S rRNA + S-adenosyl-L-homocysteine + H(+). Functionally, specifically methylates the guanine in position 1207 of 16S rRNA in the 30S particle. This chain is Ribosomal RNA small subunit methyltransferase C, found in Citrobacter koseri (strain ATCC BAA-895 / CDC 4225-83 / SGSC4696).